The chain runs to 370 residues: DNA replication and repair protein RecF (370 aa).

Gly-30 to Thr-37 is an ATP binding site.

This sequence belongs to the RecF family.

Its subcellular location is the cytoplasm. Its function is as follows. The RecF protein is involved in DNA metabolism; it is required for DNA replication and normal SOS inducibility. RecF binds preferentially to single-stranded, linear DNA. It also seems to bind ATP. The chain is DNA replication and repair protein RecF from Prosthecochloris aestuarii (strain DSM 271 / SK 413).